Consider the following 129-residue polypeptide: Follitropin subunit beta (129 aa).

The signal sequence occupies residues 1 to 20 (MKSVQLCFLFCCWRAICCKS). 6 disulfide bridges follow: C21–C69, C35–C84, C38–C122, C46–C100, C50–C102, and C105–C112. 2 N-linked (GlcNAc...) asparagine glycosylation sites follow: N25 and N42.

It belongs to the glycoprotein hormones subunit beta family. In terms of assembly, heterodimer. The active follitropin is a heterodimer composed of an alpha chain/CGA shared with other hormones and a unique beta chain/FSHB shown here.

Its subcellular location is the secreted. In terms of biological role, together with the alpha chain CGA constitutes follitropin, the follicle-stimulating hormone, and provides its biological specificity to the hormone heterodimer. Binds FSHR, a G protein-coupled receptor, on target cells to activate downstream signaling pathways. Follitropin is involved in follicle development and spermatogenesis in reproductive organs. In Ailuropoda melanoleuca (Giant panda), this protein is Follitropin subunit beta (FSHB).